We begin with the raw amino-acid sequence, 565 residues long: uncharacterized protein (565 aa).

10 consecutive transmembrane segments (helical) span residues 28 to 48 (IFHFYIYCILLGAVLLFLPFA), 73 to 93 (ASYGFLDALFLAVSAFSDTGL), 109 to 129 (VLAILLQLGGIGFVVIAFLVW), 169 to 189 (LFLFMVELLYGFLYTILFYFI), 262 to 282 (IVIQWLAISQIIFGGIGYPVL), 315 to 335 (LIVTAWCFLMLLMVEFIVITS), 364 to 384 (SLIFGPIPAASRVMQLWFGVI), 393 to 413 (VFPWSAESDIIKGIMVIAMFI), 461 to 481 (AFLVAVFGLVSVVLIAILLPL), and 526 to 546 (TLGLLMIMGQVGVSSSVLTFV).

This sequence belongs to the TrkH potassium transport family.

The protein localises to the cell membrane. This is an uncharacterized protein from Mycoplasma pneumoniae (strain ATCC 29342 / M129 / Subtype 1) (Mycoplasmoides pneumoniae).